Here is a 179-residue protein sequence, read N- to C-terminus: Large ribosomal subunit protein uL6 (179 aa).

The protein belongs to the universal ribosomal protein uL6 family. In terms of assembly, part of the 50S ribosomal subunit.

Functionally, this protein binds to the 23S rRNA, and is important in its secondary structure. It is located near the subunit interface in the base of the L7/L12 stalk, and near the tRNA binding site of the peptidyltransferase center. The sequence is that of Large ribosomal subunit protein uL6 from Crocosphaera subtropica (strain ATCC 51142 / BH68) (Cyanothece sp. (strain ATCC 51142)).